The chain runs to 299 residues: Maintenance of mitochondrial morphology protein 1 (299 aa).

Over 1–15 (MTNIIFSLQPTFTQG) the chain is Lumenal. A helical transmembrane segment spans residues 16 to 36 (LILGQLSVLVLLGLILKYLFL). Topologically, residues 37 to 299 (DSTKNPFETT…QEESKRQEEA (263 aa)) are cytoplasmic. Residues 47–68 (SYHPQFDRKPARKQQAQDSQSQ) form a disordered region. The SMP-LTD domain occupies 73 to 281 (DVESLDWFNL…LPGLASVAEA (209 aa)).

Belongs to the MMM1 family. In terms of assembly, homodimer. Component of the ER-mitochondria encounter structure (ERMES) or MDM complex, composed of MMM1, MDM10, MDM12 and MDM34. An MMM1 homodimer associates with one molecule of MDM12 on each side in a pairwise head-to-tail manner, and the SMP-LTD domains of MMM1 and MDM12 generate a continuous hydrophobic tunnel for phospholipid trafficking.

The protein resides in the endoplasmic reticulum membrane. In terms of biological role, component of the ERMES/MDM complex, which serves as a molecular tether to connect the endoplasmic reticulum (ER) and mitochondria. Components of this complex are involved in the control of mitochondrial shape and protein biogenesis, and function in nonvesicular lipid trafficking between the ER and mitochondria. The MDM12-MMM1 subcomplex functions in the major beta-barrel assembly pathway that is responsible for biogenesis of all outer membrane beta-barrel proteins, and acts in a late step after the SAM complex. The MDM10-MDM12-MMM1 subcomplex further acts in the TOM40-specific pathway after the action of the MDM12-MMM1 complex. Essential for establishing and maintaining the structure of mitochondria and maintenance of mtDNA nucleoids. This chain is Maintenance of mitochondrial morphology protein 1, found in Coprinopsis cinerea (strain Okayama-7 / 130 / ATCC MYA-4618 / FGSC 9003) (Inky cap fungus).